Consider the following 131-residue polypeptide: uncharacterized protein (131 aa).

The next 2 helical transmembrane spans lie at 68-88 (VVRATPIIGPYAGLPVIVAPI) and 94-114 (VLGAIGVVDITAGIFEDIVAI).

It is found in the cell membrane. This is an uncharacterized protein from Methanocaldococcus jannaschii (strain ATCC 43067 / DSM 2661 / JAL-1 / JCM 10045 / NBRC 100440) (Methanococcus jannaschii).